The primary structure comprises 215 residues: Protein-L-isoaspartate O-methyltransferase (215 aa).

S62 is a catalytic residue.

This sequence belongs to the methyltransferase superfamily. L-isoaspartyl/D-aspartyl protein methyltransferase family.

It localises to the cytoplasm. It catalyses the reaction [protein]-L-isoaspartate + S-adenosyl-L-methionine = [protein]-L-isoaspartate alpha-methyl ester + S-adenosyl-L-homocysteine. Functionally, catalyzes the methyl esterification of L-isoaspartyl residues in peptides and proteins that result from spontaneous decomposition of normal L-aspartyl and L-asparaginyl residues. It plays a role in the repair and/or degradation of damaged proteins. The sequence is that of Protein-L-isoaspartate O-methyltransferase from Bradyrhizobium sp. (strain ORS 278).